Consider the following 469-residue polypeptide: Glutamate--tRNA ligase (469 aa).

A 'HIGH' region motif is present at residues 9-19; that stretch reads PSPTGFLHVGG. 4 residues coordinate Zn(2+): Cys-98, Cys-100, Cys-125, and Asp-127. The 'KMSKS' region motif lies at 236–240; that stretch reads KLSKR. An ATP-binding site is contributed by Lys-239.

The protein belongs to the class-I aminoacyl-tRNA synthetase family. Glutamate--tRNA ligase type 1 subfamily. Monomer. Zn(2+) serves as cofactor.

The protein localises to the cytoplasm. It catalyses the reaction tRNA(Glu) + L-glutamate + ATP = L-glutamyl-tRNA(Glu) + AMP + diphosphate. Its function is as follows. Catalyzes the attachment of glutamate to tRNA(Glu) in a two-step reaction: glutamate is first activated by ATP to form Glu-AMP and then transferred to the acceptor end of tRNA(Glu). In Shewanella sp. (strain W3-18-1), this protein is Glutamate--tRNA ligase.